We begin with the raw amino-acid sequence, 102 residues long: Cytochrome c (102 aa).

An N-acetylglycine modification is found at Gly1. A compositionally biased stretch (basic and acidic residues) spans 1–11 (GDAERGKKLFE). Positions 1-26 (GDAERGKKLFESRAGQCHSSQKGVNS) are disordered. Cys17, His18, and Met79 together coordinate heme c. Residues 17 to 26 (CHSSQKGVNS) are compositionally biased toward polar residues. An N6,N6,N6-trimethyllysine modification is found at Lys85.

Belongs to the cytochrome c family. Binds 1 heme c group covalently per subunit.

Its subcellular location is the mitochondrion intermembrane space. In terms of biological role, electron carrier protein. The oxidized form of the cytochrome c heme group can accept an electron from the heme group of the cytochrome c1 subunit of cytochrome reductase. Cytochrome c then transfers this electron to the cytochrome oxidase complex, the final protein carrier in the mitochondrial electron-transport chain. The polypeptide is Cytochrome c (Euglena viridis (Cercaria viridis)).